The following is a 313-amino-acid chain: Phosphoenolpyruvate phosphomutase (313 aa).

The segment at 1–23 is disordered; it reads MNATERPGSDGTGSPESVGSRLK. Asp-69 (nucleophile) is an active-site residue.

Belongs to the isocitrate lyase/PEP mutase superfamily. PEP mutase family.

The enzyme catalyses phosphoenolpyruvate + H(+) = 3-phosphonopyruvate. Its pathway is secondary metabolite biosynthesis; bialaphos biosynthesis. Functionally, formation of a carbon-phosphorus bond by converting phosphoenolpyruvate (PEP) to phosphonopyruvate (P-Pyr). The protein is Phosphoenolpyruvate phosphomutase (ppm) of Streptomyces viridochromogenes (strain DSM 40736 / JCM 4977 / BCRC 1201 / Tue 494).